Consider the following 485-residue polypeptide: Ribulose bisphosphate carboxylase large chain 2 (485 aa).

Residues Asn-124 and Thr-174 each coordinate substrate. Catalysis depends on Lys-176, which acts as the Proton acceptor. Lys-178 contacts substrate. The Mg(2+) site is built by Lys-202, Asp-204, and Glu-205. Lys-202 carries the N6-carboxylysine modification. Residue His-294 is the Proton acceptor of the active site. Residues Arg-295, His-327, and Ser-379 each coordinate substrate.

The protein belongs to the RuBisCO large chain family. Type I subfamily. Heterohexadecamer of 8 large chains and 8 small chains. Requires Mg(2+) as cofactor.

It catalyses the reaction 2 (2R)-3-phosphoglycerate + 2 H(+) = D-ribulose 1,5-bisphosphate + CO2 + H2O. The catalysed reaction is D-ribulose 1,5-bisphosphate + O2 = 2-phosphoglycolate + (2R)-3-phosphoglycerate + 2 H(+). Functionally, ruBisCO catalyzes two reactions: the carboxylation of D-ribulose 1,5-bisphosphate, the primary event in carbon dioxide fixation, as well as the oxidative fragmentation of the pentose substrate. Both reactions occur simultaneously and in competition at the same active site. This Rhodopseudomonas palustris (strain BisB5) protein is Ribulose bisphosphate carboxylase large chain 2.